Consider the following 354-residue polypeptide: Erythroferrone (354 aa).

A signal peptide spans 1–28 (MAPARRPAGARLLLVYAGLLAAAAAGLG). Composition is skewed to low complexity over residues 26-37 (GLGSPEPGAPSR) and 51-62 (PRGPGESRAGPA). A disordered region spans residues 26 to 123 (GLGSPEPGAP…PGPPGPQGPP (98 aa)). Basic and acidic residues predominate over residues 69 to 80 (TAERAHSVDPRD). Over residues 94–107 (NGKKRSRGKAKKLK) the composition is skewed to basic residues. Hydroxyproline occurs at positions 111, 113, 114, 116, 117, and 119. A compositionally biased stretch (pro residues) spans 111-123 (PGPPGPPGPQGPP). One can recognise a C1q domain in the interval 199 to 354 (APRVEAAFLC…SHFSAVLLGV (156 aa)). Residues Asn-243, Asn-295, and Asn-333 are each glycosylated (N-linked (GlcNAc...) asparagine).

It belongs to the adipolin/erythroferrone family. As to quaternary structure, homodimer; disulfide-linked. Forms trimer, hexamers and higher molecular weight oligomers. May form heteromeric complexes with C1QTNF2 and C1QTNF12 and, to a lesser extent, with C1QTNF5 and C1QTNF10. Interacts with BMP5 and BMP7; the interaction inhibits BMP-induced transcription of HAMP. Interacts with BMP6; the interaction inhibits BMP-induced transcription of HAMP. Interacts with BMP2. Interacts with heterodimers composed of BMP2 and BMP6 in vitro, the interaction inhibits the heterodimer binding to its receptor BMPR1A /ALK3 and thereby suppresses expression of HAMP. In terms of processing, N-glycosylated; required for secretion of the mature protein.

It localises to the secreted. Its function is as follows. Iron-regulatory hormone that acts as an erythroid regulator after hemorrhage: produced by erythroblasts following blood loss and mediates suppression of hepcidin (HAMP) expression in the liver, thereby promoting increased iron absorption and mobilization from stores. Promotes lipid uptake into adipocytes and hepatocytes via transcriptional up-regulation of genes involved in fatty acid uptake. Inhibits apoptosis and inflammatory response in cardiomyocytes via promotion of sphingosine-1-phosphate (S1P) and cAMP-dependent activation of AKT signaling. Inhibits autophagy induced by nutrient deficiency in hepatocytes via promoting the phosphorylation of IRS1, AKT, and MTOR, and thereby subsequent activation of the AKT-MTOR signaling pathway. Negatively regulates the differentiation of osteoblasts, potentially via sequestering BMP2, and thereby inhibits the activation of SMAD signaling. The reduction in BMP2 signaling in osteoblasts also results in an increase in expression of the osteoclastogenesis-promoting factors TNFSF11/RANKL and SOST, thereby indirectly promotes bone resorption. This is Erythroferrone from Homo sapiens (Human).